Reading from the N-terminus, the 176-residue chain is Ferritin, higher subunit (176 aa).

Positions 7 to 156 (QNFHRDCEAA…DYITNLKRLG (150 aa)) constitute a Ferritin-like diiron domain. 6 residues coordinate Fe cation: Glu-24, Glu-58, Glu-59, His-62, Glu-104, and Gln-138.

This sequence belongs to the ferritin family. Oligomer of 24 subunits. The functional molecule is roughly spherical and contains a central cavity into which the polymeric mineral iron core is deposited.

The enzyme catalyses 4 Fe(2+) + O2 + 4 H(+) = 4 Fe(3+) + 2 H2O. In terms of biological role, stores iron in a soluble, non-toxic, readily available form. Important for iron homeostasis. Has ferroxidase activity. Iron is taken up in the ferrous form and deposited as ferric hydroxides after oxidation. In Aquarana catesbeiana (American bullfrog), this protein is Ferritin, higher subunit.